The primary structure comprises 269 residues: Shikimate dehydrogenase (NADP(+)) (269 aa).

Shikimate contacts are provided by residues 17-19 and Thr-64; that span reads SKS. Residue Lys-68 is the Proton acceptor of the active site. Asp-80 is a binding site for NADP(+). Shikimate is bound by residues Asn-89 and Asp-105. Residues 130 to 134, 154 to 159, and Met-213 contribute to the NADP(+) site; these read GAGGA and NRTRAK. Tyr-215 is a binding site for shikimate. Gly-237 is a binding site for NADP(+).

The protein belongs to the shikimate dehydrogenase family. In terms of assembly, homodimer.

The catalysed reaction is shikimate + NADP(+) = 3-dehydroshikimate + NADPH + H(+). It participates in metabolic intermediate biosynthesis; chorismate biosynthesis; chorismate from D-erythrose 4-phosphate and phosphoenolpyruvate: step 4/7. Functionally, involved in the biosynthesis of the chorismate, which leads to the biosynthesis of aromatic amino acids. Catalyzes the reversible NADPH linked reduction of 3-dehydroshikimate (DHSA) to yield shikimate (SA). This is Shikimate dehydrogenase (NADP(+)) from Neisseria gonorrhoeae (strain ATCC 700825 / FA 1090).